The sequence spans 631 residues: Probable glutamate--tRNA ligase, cytoplasmic (631 aa).

Position 139 to 141 (139 to 141 (RFP)) interacts with L-glutamate. The short motif at 144-153 (PSGFLHIGHI) is the 'HIGH' region element. Residue His-149 participates in ATP binding. L-glutamate contacts are provided by residues Asp-173, 311–315 (YDFAC), and Arg-329. Residues Glu-332 and 367-371 (VLSKR) contribute to the ATP site. The short motif at 367–371 (VLSKR) is the 'KMSKS' region element.

This sequence belongs to the class-I aminoacyl-tRNA synthetase family. Glutamate--tRNA ligase type 2 subfamily.

It localises to the cytoplasm. It carries out the reaction tRNA(Glu) + L-glutamate + ATP = L-glutamyl-tRNA(Glu) + AMP + diphosphate. This is Probable glutamate--tRNA ligase, cytoplasmic from Enterocytozoon bieneusi (strain H348) (Microsporidian parasite).